A 332-amino-acid polypeptide reads, in one-letter code: Probable cytosolic iron-sulfur protein assembly protein 1 (332 aa).

WD repeat units follow at residues Gly9–Thr48, Gly52–Leu93, Gly98–Glu137, Asp144–Val183, Gly188–Gly230, Ala257–Val295, and Ala302–Val332.

Belongs to the WD repeat CIA1 family. Interacts with NAR1.

It localises to the cytoplasm. Its subcellular location is the nucleus. In terms of biological role, essential component of the cytosolic iron-sulfur (Fe/S) protein assembly machinery. Required for the maturation of extramitochondrial Fe/S proteins. The protein is Probable cytosolic iron-sulfur protein assembly protein 1 of Yarrowia lipolytica (strain CLIB 122 / E 150) (Yeast).